The sequence spans 275 residues: 2,3,4,5-tetrahydropyridine-2,6-dicarboxylate N-succinyltransferase (275 aa).

Substrate contacts are provided by arginine 107 and aspartate 144.

This sequence belongs to the transferase hexapeptide repeat family. Homotrimer.

Its subcellular location is the cytoplasm. It catalyses the reaction (S)-2,3,4,5-tetrahydrodipicolinate + succinyl-CoA + H2O = (S)-2-succinylamino-6-oxoheptanedioate + CoA. The protein operates within amino-acid biosynthesis; L-lysine biosynthesis via DAP pathway; LL-2,6-diaminopimelate from (S)-tetrahydrodipicolinate (succinylase route): step 1/3. This Polynucleobacter asymbioticus (strain DSM 18221 / CIP 109841 / QLW-P1DMWA-1) (Polynucleobacter necessarius subsp. asymbioticus) protein is 2,3,4,5-tetrahydropyridine-2,6-dicarboxylate N-succinyltransferase.